The following is a 366-amino-acid chain: Transcription factor IIIA (366 aa).

9 C2H2-type zinc fingers span residues 35–59 (YICS…LCKH), 65–89 (FPCK…SLTH), 95–120 (FTCD…NRFH), 127–151 (YVCH…QFSH), 157–181 (YECP…EKVH), 184–210 (YPCK…AECH), 214–236 (AVCD…QKTH), 243–268 (YLCP…QSFH), and 274–298 (FVCE…SVVH). S38 bears the Phosphoserine; by CK2 mark. Positions 299-310 (DPEKRKLKEKCP) are enriched in basic and acidic residues. The disordered stretch occupies residues 299–366 (DPEKRKLKEK…SLVLDKLTIQ (68 aa)). At S336 the chain carries Phosphoserine; by CK2; in vitro.

Post-translationally, the N-terminus is blocked. In terms of tissue distribution, synthesized in oocytes and, in much lower levels, in somatic cells.

The protein resides in the nucleus. Functionally, involved in ribosomal large subunit biogenesis. Acts both as a positive transcription factor for 5S RNA genes, and as a specific RNA binding protein that complexes with 5S RNA in oocytes to form the 7S ribonucleoprotein storage particle. May play an essential role in the developmental change in 5S RNA gene expression. Interacts with the internal control region (ICR) of approximately 50 bases within the 5S RNA genes, is required for correct transcription of these genes by RNA polymerase III. Also binds the transcribed 5S RNA's. The sequence is that of Transcription factor IIIA (gtf3a) from Xenopus laevis (African clawed frog).